Here is a 219-residue protein sequence, read N- to C-terminus: Response regulator ArlR (219 aa).

The Response regulatory domain occupies 3–116 (QILIVEDEQN…ELLARIRAIL (114 aa)). The residue at position 52 (D52) is a 4-aspartylphosphate. The ompR/PhoB-type DNA-binding region spans 122-219 (KDIIDVNGIT…TVRGVGYVIR (98 aa)).

Post-translationally, phosphorylated by ArlS.

The protein localises to the cytoplasm. Member of the two-component regulatory system ArlS/ArlR involved in the regulation of adhesion, autolysis, multidrug resistance and virulence. The polypeptide is Response regulator ArlR (arlR) (Staphylococcus aureus (strain USA300)).